Consider the following 379-residue polypeptide: Alkanesulfonate monooxygenase (379 aa).

The protein belongs to the SsuD family.

The catalysed reaction is an alkanesulfonate + FMNH2 + O2 = an aldehyde + FMN + sulfite + H2O + 2 H(+). In terms of biological role, catalyzes the desulfonation of aliphatic sulfonates. This chain is Alkanesulfonate monooxygenase, found in Pseudomonas syringae pv. tomato (strain ATCC BAA-871 / DC3000).